The primary structure comprises 842 residues: Xyloglucanase Xgh74A (842 aa).

Positions methionine 1 to alanine 32 are cleaved as a signal peptide. Catalysis depends on aspartate 70, which acts as the Nucleophile. BNR repeat units lie at residues arginine 134–lysine 144, tryptophan 185–lysine 196, tyrosine 252–lysine 262, and phenylalanine 358–lysine 368. Aspartate 480 (proton donor) is an active-site residue. 5 BNR repeats span residues phenylalanine 533–tryptophan 541, valine 577–lysine 586, tyrosine 616–threonine 626, tryptophan 660–lysine 671, and phenylalanine 708–valine 718. One can recognise a Dockerin domain in the interval aspartate 771–lysine 841.

Belongs to the glycosyl hydrolase 74 family.

Functionally, hydrolyzes the glucosidic bonds of unbranched Glc residues in tamarind seed xyloglucan, producing XXXG, XLXG, XXLG and XLLG. Has low activity on carboxymethylcellulose, lichenan,hydroxyethylcellulose and glucuronoxylan, and no activity on xylan, polygalaturonic acid, wheat arabinoxylan, rhamnogalacturan, curdlan, laminarin, galactomannan, galactan, arabinan and pachyman or amorphous cellulose. The protein is Xyloglucanase Xgh74A of Acetivibrio thermocellus (Hungateiclostridium thermocellum).